The primary structure comprises 395 residues: L-rhamnonate dehydratase (395 aa).

Substrate is bound by residues H23 and R49. 3 residues coordinate Mg(2+): D215, E241, and E269. H319 functions as the Proton acceptor in the catalytic mechanism. E339 is a binding site for substrate.

It belongs to the mandelate racemase/muconate lactonizing enzyme family. RhamD subfamily. As to quaternary structure, homooctamer; tetramer of dimers. Mg(2+) is required as a cofactor.

It carries out the reaction L-rhamnonate = 2-dehydro-3-deoxy-L-rhamnonate + H2O. Catalyzes the dehydration of L-rhamnonate to 2-keto-3-deoxy-L-rhamnonate (KDR). This Polaromonas sp. (strain JS666 / ATCC BAA-500) protein is L-rhamnonate dehydratase (rhmD).